The primary structure comprises 279 residues: Probable endonuclease 4 (279 aa).

Zn(2+) contacts are provided by His69, His109, Glu145, Asp179, His182, His216, Asp229, His231, and Glu261.

This sequence belongs to the AP endonuclease 2 family. Zn(2+) serves as cofactor.

The catalysed reaction is Endonucleolytic cleavage to 5'-phosphooligonucleotide end-products.. Its function is as follows. Endonuclease IV plays a role in DNA repair. It cleaves phosphodiester bonds at apurinic or apyrimidinic (AP) sites, generating a 3'-hydroxyl group and a 5'-terminal sugar phosphate. This Chlorobium luteolum (strain DSM 273 / BCRC 81028 / 2530) (Pelodictyon luteolum) protein is Probable endonuclease 4.